Consider the following 351-residue polypeptide: Protein IBD2 (351 aa).

Positions 1–14 (MTPTNQSSGTTNAS) are enriched in polar residues. The tract at residues 1–20 (MTPTNQSSGTTNASVEVLSE) is disordered. Phosphoserine is present on residues Ser-100 and Ser-106. Position 211 is a phosphothreonine (Thr-211). The disordered stretch occupies residues 223-249 (LHGDGQHSISSRKHSRSKNSKKNGHVR). Over residues 232 to 249 (SSRKHSRSKNSKKNGHVR) the composition is skewed to basic residues.

This sequence belongs to the IBD2 family. In terms of assembly, interacts with BFA1.

It is found in the cytoplasm. It localises to the cytoskeleton. The protein localises to the spindle pole. In terms of biological role, part of a checkpoint which monitors spindle integrity and prevents premature exit from mitosis. This cell-cycle arrest depends upon inhibition of the G-protein TEM1 by the BFA1/BUB2 complex. The chain is Protein IBD2 (IBD2) from Saccharomyces cerevisiae (strain ATCC 204508 / S288c) (Baker's yeast).